Consider the following 223-residue polypeptide: Uridylate kinase (223 aa).

Residue 9-10 coordinates ATP; the sequence is GS. Gly43 serves as a coordination point for UMP. ATP contacts are provided by Gly44 and Arg48. UMP is bound by residues Asp65 and 112-118; that span reads THPGHTT. ATP contacts are provided by Thr137, Asn138, Tyr143, and Asp146.

This sequence belongs to the UMP kinase family. As to quaternary structure, homohexamer.

The protein resides in the cytoplasm. The enzyme catalyses UMP + ATP = UDP + ADP. The protein operates within pyrimidine metabolism; CTP biosynthesis via de novo pathway; UDP from UMP (UMPK route): step 1/1. Inhibited by UTP. In terms of biological role, catalyzes the reversible phosphorylation of UMP to UDP. The sequence is that of Uridylate kinase from Methanopyrus kandleri (strain AV19 / DSM 6324 / JCM 9639 / NBRC 100938).